The chain runs to 284 residues: Probable endonuclease 4 (284 aa).

Residues His69, His109, Glu145, Asp179, His182, His216, Asp229, His231, and Glu261 each contribute to the Zn(2+) site.

Belongs to the AP endonuclease 2 family. Requires Zn(2+) as cofactor.

It catalyses the reaction Endonucleolytic cleavage to 5'-phosphooligonucleotide end-products.. Its function is as follows. Endonuclease IV plays a role in DNA repair. It cleaves phosphodiester bonds at apurinic or apyrimidinic (AP) sites, generating a 3'-hydroxyl group and a 5'-terminal sugar phosphate. This Klebsiella pneumoniae (strain 342) protein is Probable endonuclease 4.